We begin with the raw amino-acid sequence, 92 residues long: RNA-binding protein Hfq (92 aa).

In terms of domain architecture, Sm spans 9–68 (DPFLNALRRERVPVSVYLVNGIKLQGTIESFDQFVVLLRNTVSQMVYKHAISTVVPARNV).

Belongs to the Hfq family. Homohexamer.

Its function is as follows. RNA chaperone that binds small regulatory RNA (sRNAs) and mRNAs to facilitate mRNA translational regulation in response to envelope stress, environmental stress and changes in metabolite concentrations. Also binds with high specificity to tRNAs. The sequence is that of RNA-binding protein Hfq from Xylella fastidiosa (strain M12).